Here is a 103-residue protein sequence, read N- to C-terminus: SOSS complex subunit C (103 aa).

This sequence belongs to the SOSS-C family. As to quaternary structure, belongs to the multiprotein complex Integrator. Component of the SOSS complex, composed of SOSS-B (SOSS-B1/NABP2 or SOSS-B2/NABP1), SOSS-A/INTS3 and SOSS-C/INIP.

It is found in the nucleus. Component of the SOSS complex, a multiprotein complex that functions downstream of the MRN complex to promote DNA repair and G2/M checkpoint. The SOSS complex associates with single-stranded DNA at DNA lesions and influences diverse endpoints in the cellular DNA damage response including cell-cycle checkpoint activation, recombinational repair and maintenance of genomic stability. Required for efficient homologous recombination-dependent repair of double-strand breaks (DSBs). In Gallus gallus (Chicken), this protein is SOSS complex subunit C (INIP).